The chain runs to 308 residues: Aspartate carbamoyltransferase catalytic subunit (308 aa).

Residues R57 and T58 each coordinate carbamoyl phosphate. K86 is a binding site for L-aspartate. The carbamoyl phosphate site is built by R107, H135, and Q138. L-aspartate is bound by residues R168 and R228. L267 and P268 together coordinate carbamoyl phosphate.

The protein belongs to the aspartate/ornithine carbamoyltransferase superfamily. ATCase family. In terms of assembly, heterododecamer (2C3:3R2) of six catalytic PyrB chains organized as two trimers (C3), and six regulatory PyrI chains organized as three dimers (R2).

The catalysed reaction is carbamoyl phosphate + L-aspartate = N-carbamoyl-L-aspartate + phosphate + H(+). It functions in the pathway pyrimidine metabolism; UMP biosynthesis via de novo pathway; (S)-dihydroorotate from bicarbonate: step 2/3. Functionally, catalyzes the condensation of carbamoyl phosphate and aspartate to form carbamoyl aspartate and inorganic phosphate, the committed step in the de novo pyrimidine nucleotide biosynthesis pathway. In Leptospira interrogans serogroup Icterohaemorrhagiae serovar Lai (strain 56601), this protein is Aspartate carbamoyltransferase catalytic subunit.